The sequence spans 650 residues: Histone-lysine N-methyltransferase family member SUVH9 (650 aa).

2 disordered regions span residues 1-24 (MGSS…KLEP) and 95-129 (PVEE…RSSE). Over residues 7–20 (PLDPSLNPSPSLIP) the composition is skewed to low complexity. Over residues 107–118 (YSTSDSSPSVAT) the composition is skewed to polar residues. The YDG domain occupies 205–352 (GSIPGVQVGD…FGVFKYRLER (148 aa)). The Pre-SET domain maps to 432–490 (SGCDCVNGCGSGCLCEAKNSGEIAYDYNGTLIRQKPLIHECGSACQCPPSCRNRVTQKG). Residues Cys434, Cys436, Cys440, Cys444, Cys446, Cys472, Cys476, Cys478, and Cys482 each contribute to the Zn(2+) site. An SET domain is found at 493 to 637 (NRLEVFRSLE…PMTELSLDYG (145 aa)).

The protein belongs to the class V-like SAM-binding methyltransferase superfamily. Histone-lysine methyltransferase family. Suvar3-9 subfamily. In terms of assembly, component of an RNA-directed DNA methylation (RdDM) complex that contains at least MORC6, MORC1/CRT1, MORC2, SWI3D and SUVH9. Interacts directly with MORC6, MORC2 and MORC1/CRT1. Interacts with SWI3B, SWI3C and SWI3D.

Its subcellular location is the nucleus. The protein resides in the chromosome. It localises to the centromere. Its function is as follows. Histone methyltransferase family member that plays a role in gene silencing. Together with MORC6 and SUVH2, regulates the silencing of some transposable elements (TEs). According to PubMed:19043555, the protein does not bind S-adenosyl-L-methionine and lacks methyltransferase activity. Instead, it may function downstream of DRM2 in RNA-directed DNA methylation, binding to methylated DNA and recruiting DNA-directed RNA polymerase V to chromatin. In Arabidopsis thaliana (Mouse-ear cress), this protein is Histone-lysine N-methyltransferase family member SUVH9 (SUVH9).